Consider the following 603-residue polypeptide: Proline--tRNA ligase (603 aa).

Belongs to the class-II aminoacyl-tRNA synthetase family. ProS type 1 subfamily. Homodimer.

Its subcellular location is the cytoplasm. It catalyses the reaction tRNA(Pro) + L-proline + ATP = L-prolyl-tRNA(Pro) + AMP + diphosphate. In terms of biological role, catalyzes the attachment of proline to tRNA(Pro) in a two-step reaction: proline is first activated by ATP to form Pro-AMP and then transferred to the acceptor end of tRNA(Pro). As ProRS can inadvertently accommodate and process non-cognate amino acids such as alanine and cysteine, to avoid such errors it has two additional distinct editing activities against alanine. One activity is designated as 'pretransfer' editing and involves the tRNA(Pro)-independent hydrolysis of activated Ala-AMP. The other activity is designated 'posttransfer' editing and involves deacylation of mischarged Ala-tRNA(Pro). The misacylated Cys-tRNA(Pro) is not edited by ProRS. The polypeptide is Proline--tRNA ligase (Arthrobacter sp. (strain FB24)).